The sequence spans 84 residues: MPSPKIQEIINELDNLMNRERKYIELVATVEYLLNLIEPSKREKFKEALYDAETVEDVYELIKAIKLQLGMQGARRYLLTLEGQ.

A coiled-coil region spans residues 5 to 31 (KIQEIINELDNLMNRERKYIELVATVE).

This is an uncharacterized protein from Methanocaldococcus jannaschii (strain ATCC 43067 / DSM 2661 / JAL-1 / JCM 10045 / NBRC 100440) (Methanococcus jannaschii).